The following is a 128-amino-acid chain: Large ribosomal subunit protein uL22 (128 aa).

The protein belongs to the universal ribosomal protein uL22 family. As to quaternary structure, part of the 50S ribosomal subunit.

Its function is as follows. This protein binds specifically to 23S rRNA; its binding is stimulated by other ribosomal proteins, e.g. L4, L17, and L20. It is important during the early stages of 50S assembly. It makes multiple contacts with different domains of the 23S rRNA in the assembled 50S subunit and ribosome. The globular domain of the protein is located near the polypeptide exit tunnel on the outside of the subunit, while an extended beta-hairpin is found that lines the wall of the exit tunnel in the center of the 70S ribosome. This Nitrobacter hamburgensis (strain DSM 10229 / NCIMB 13809 / X14) protein is Large ribosomal subunit protein uL22.